We begin with the raw amino-acid sequence, 257 residues long: Protein LigF (257 aa).

In terms of domain architecture, GST N-terminal spans 1–82; it reads MTLKLYSFGP…YLEDVFPESG (82 aa). In terms of domain architecture, GST C-terminal spans 89 to 257; sequence DPFKRAEMRV…LLKRQNEKVA (169 aa).

This sequence belongs to the GST superfamily.

Lignin degradation enzyme. The polypeptide is Protein LigF (ligF) (Sphingobium sp. (strain NBRC 103272 / SYK-6)).